A 354-amino-acid chain; its full sequence is Glycerol-1-phosphate dehydrogenase [NAD(P)+] (354 aa).

NAD(+) contacts are provided by residues Gly103–Asp107 and Thr125–Ser128. A substrate-binding site is contributed by Asp130. Ser134 serves as a coordination point for NAD(+). Position 176 (Asp176) interacts with substrate. 2 residues coordinate Zn(2+): Asp176 and His255. Substrate is bound at residue His259. His271 provides a ligand contact to Zn(2+).

The protein belongs to the glycerol-1-phosphate dehydrogenase family. In terms of assembly, homodimer. The cofactor is Zn(2+).

The protein localises to the cytoplasm. The enzyme catalyses sn-glycerol 1-phosphate + NAD(+) = dihydroxyacetone phosphate + NADH + H(+). It carries out the reaction sn-glycerol 1-phosphate + NADP(+) = dihydroxyacetone phosphate + NADPH + H(+). Its pathway is membrane lipid metabolism; glycerophospholipid metabolism. Functionally, catalyzes the NAD(P)H-dependent reduction of dihydroxyacetonephosphate (DHAP or glycerone phosphate) to glycerol 1-phosphate (G1P). The G1P thus generated is used as the glycerophosphate backbone of phospholipids in the cellular membranes of Archaea. The protein is Glycerol-1-phosphate dehydrogenase [NAD(P)+] of Cenarchaeum symbiosum (strain A).